Consider the following 249-residue polypeptide: MIVKYGGNAMKSVELRRAVAGEIAALRAEQPVVVVHGGGPVIERELAARGIASEFSNGLRVTSPQAMAVVEMALAQLNKQLSQDIGAAVGLLGRDSELLVAEVLDPALGRVGRVTRVNAGLLRTLLGVGLTPVVGCVAVGPDGDALNVNADTAAGAVAGALGEGIVFLTDVDGIYRAYPDPESLASQLPRAEVEAGIRDGWIAGGMIPKVRAALEALDAGAPFAVIASGMQPGVLAAAARGEAGTRLTP.

Residues 38-39 (GG), Arg60, and Asn147 contribute to the substrate site.

It belongs to the acetylglutamate kinase family. ArgB subfamily.

It localises to the cytoplasm. It carries out the reaction N-acetyl-L-glutamate + ATP = N-acetyl-L-glutamyl 5-phosphate + ADP. It functions in the pathway amino-acid biosynthesis; L-arginine biosynthesis; N(2)-acetyl-L-ornithine from L-glutamate: step 2/4. Functionally, catalyzes the ATP-dependent phosphorylation of N-acetyl-L-glutamate. The sequence is that of Acetylglutamate kinase from Deinococcus geothermalis (strain DSM 11300 / CIP 105573 / AG-3a).